Here is a 238-residue protein sequence, read N- to C-terminus: Ribonuclease PH (238 aa).

The disordered stretch occupies residues 67 to 87; it reads PRSTHTRSDREAARGKQSGRT. Phosphate-binding positions include Arg86 and 124–126; that span reads GTR.

It belongs to the RNase PH family. Homohexameric ring arranged as a trimer of dimers.

It carries out the reaction tRNA(n+1) + phosphate = tRNA(n) + a ribonucleoside 5'-diphosphate. Phosphorolytic 3'-5' exoribonuclease that plays an important role in tRNA 3'-end maturation. Removes nucleotide residues following the 3'-CCA terminus of tRNAs; can also add nucleotides to the ends of RNA molecules by using nucleoside diphosphates as substrates, but this may not be physiologically important. Probably plays a role in initiation of 16S rRNA degradation (leading to ribosome degradation) during starvation. The sequence is that of Ribonuclease PH from Ralstonia nicotianae (strain ATCC BAA-1114 / GMI1000) (Ralstonia solanacearum).